Consider the following 283-residue polypeptide: Probable endonuclease 4 (283 aa).

Zn(2+)-binding residues include His-66, His-106, Glu-141, Asp-174, His-177, His-211, Asp-224, His-226, and Glu-256.

This sequence belongs to the AP endonuclease 2 family. It depends on Zn(2+) as a cofactor.

The catalysed reaction is Endonucleolytic cleavage to 5'-phosphooligonucleotide end-products.. Functionally, endonuclease IV plays a role in DNA repair. It cleaves phosphodiester bonds at apurinic or apyrimidinic (AP) sites, generating a 3'-hydroxyl group and a 5'-terminal sugar phosphate. This Carboxydothermus hydrogenoformans (strain ATCC BAA-161 / DSM 6008 / Z-2901) protein is Probable endonuclease 4.